Consider the following 536-residue polypeptide: CTP synthase (536 aa).

The segment at 1-267 is amidoligase domain; it reads MSKFVFVTGG…CKETLKYLEL (267 aa). Residue S13 coordinates CTP. UTP is bound at residue S13. Residues 14 to 19 and D71 contribute to the ATP site; that span reads SIGKGI. The Mg(2+) site is built by D71 and E141. CTP-binding positions include 148–150, 188–193, and K224; these read DIE and KTKPTQ. Residues 188–193 and K224 contribute to the UTP site; that span reads KTKPTQ. One can recognise a Glutamine amidotransferase type-1 domain in the interval 292–534; sequence KVALVGKYIE…IKSSQENLTQ (243 aa). G354 lines the L-glutamine pocket. C381 serves as the catalytic Nucleophile; for glutamine hydrolysis. L-glutamine contacts are provided by residues 382–385, E405, and R462; that span reads LGMQ. Catalysis depends on residues H507 and E509.

This sequence belongs to the CTP synthase family. As to quaternary structure, homotetramer.

The catalysed reaction is UTP + L-glutamine + ATP + H2O = CTP + L-glutamate + ADP + phosphate + 2 H(+). The enzyme catalyses L-glutamine + H2O = L-glutamate + NH4(+). It carries out the reaction UTP + NH4(+) + ATP = CTP + ADP + phosphate + 2 H(+). Its pathway is pyrimidine metabolism; CTP biosynthesis via de novo pathway; CTP from UDP: step 2/2. Its activity is regulated as follows. Allosterically activated by GTP, when glutamine is the substrate; GTP has no effect on the reaction when ammonia is the substrate. The allosteric effector GTP functions by stabilizing the protein conformation that binds the tetrahedral intermediate(s) formed during glutamine hydrolysis. Inhibited by the product CTP, via allosteric rather than competitive inhibition. Functionally, catalyzes the ATP-dependent amination of UTP to CTP with either L-glutamine or ammonia as the source of nitrogen. Regulates intracellular CTP levels through interactions with the four ribonucleotide triphosphates. The sequence is that of CTP synthase from Prochlorococcus marinus (strain MIT 9312).